A 45-amino-acid polypeptide reads, in one-letter code: Photosystem II reaction center protein K (45 aa).

A propeptide spanning residues 1–8 (MEAVFLLA) is cleaved from the precursor. The chain crosses the membrane as a helical span at residues 24-44 (LPVIPVFFLALAFVWQAAVGF).

It belongs to the PsbK family. In terms of assembly, PSII is composed of 1 copy each of membrane proteins PsbA, PsbB, PsbC, PsbD, PsbE, PsbF, PsbH, PsbI, PsbJ, PsbK, PsbL, PsbM, PsbT, PsbX, PsbY, PsbZ, Psb30/Ycf12, peripheral proteins PsbO, CyanoQ (PsbQ), PsbU, PsbV and a large number of cofactors. It forms dimeric complexes.

The protein localises to the cellular thylakoid membrane. Functionally, one of the components of the core complex of photosystem II (PSII). PSII is a light-driven water:plastoquinone oxidoreductase that uses light energy to abstract electrons from H(2)O, generating O(2) and a proton gradient subsequently used for ATP formation. It consists of a core antenna complex that captures photons, and an electron transfer chain that converts photonic excitation into a charge separation. This is Photosystem II reaction center protein K from Crocosphaera subtropica (strain ATCC 51142 / BH68) (Cyanothece sp. (strain ATCC 51142)).